A 227-amino-acid polypeptide reads, in one-letter code: Large ribosomal subunit protein bL25 (227 aa).

Residues 199 to 227 are disordered; the sequence is AIAEAQSAEAAEEKAEESAEDEKKDGEEA. Basic and acidic residues predominate over residues 209–227; that stretch reads AEEKAEESAEDEKKDGEEA.

Belongs to the bacterial ribosomal protein bL25 family. CTC subfamily. As to quaternary structure, part of the 50S ribosomal subunit; part of the 5S rRNA/L5/L18/L25 subcomplex. Contacts the 5S rRNA. Binds to the 5S rRNA independently of L5 and L18.

Functionally, this is one of the proteins that binds to the 5S RNA in the ribosome where it forms part of the central protuberance. The chain is Large ribosomal subunit protein bL25 from Methylobacterium radiotolerans (strain ATCC 27329 / DSM 1819 / JCM 2831 / NBRC 15690 / NCIMB 10815 / 0-1).